Reading from the N-terminus, the 177-residue chain is Tubulin beta chain (177 aa).

Residues Y156–A177 are disordered. The segment covering T160–A177 has biased composition (acidic residues).

The protein belongs to the tubulin family. Dimer of alpha and beta chains. A typical microtubule is a hollow water-filled tube with an outer diameter of 25 nm and an inner diameter of 15 nM. Alpha-beta heterodimers associate head-to-tail to form protofilaments running lengthwise along the microtubule wall with the beta-tubulin subunit facing the microtubule plus end conferring a structural polarity. Microtubules usually have 13 protofilaments but different protofilament numbers can be found in some organisms and specialized cells. It depends on Mg(2+) as a cofactor.

Its subcellular location is the cytoplasm. It is found in the cytoskeleton. Tubulin is the major constituent of microtubules, a cylinder consisting of laterally associated linear protofilaments composed of alpha- and beta-tubulin heterodimers. Microtubules grow by the addition of GTP-tubulin dimers to the microtubule end, where a stabilizing cap forms. Below the cap, tubulin dimers are in GDP-bound state, owing to GTPase activity of alpha-tubulin. The polypeptide is Tubulin beta chain (Lytechinus pictus (Painted sea urchin)).